The chain runs to 174 residues: Large ribosomal subunit protein uL10 (174 aa).

It belongs to the universal ribosomal protein uL10 family. As to quaternary structure, part of the ribosomal stalk of the 50S ribosomal subunit. The N-terminus interacts with L11 and the large rRNA to form the base of the stalk. The C-terminus forms an elongated spine to which L12 dimers bind in a sequential fashion forming a multimeric L10(L12)X complex.

Forms part of the ribosomal stalk, playing a central role in the interaction of the ribosome with GTP-bound translation factors. The sequence is that of Large ribosomal subunit protein uL10 from Bordetella petrii (strain ATCC BAA-461 / DSM 12804 / CCUG 43448).